The following is a 148-amino-acid chain: 3-dehydroquinate dehydratase (148 aa).

Substrate is bound by residues Asn-74, His-80, and Asp-87. Residue His-100 is the Proton donor of the active site. Residues 101-102 and Arg-111 contribute to the substrate site; that span reads LS.

This sequence belongs to the type-II 3-dehydroquinase family. As to quaternary structure, homododecamer.

The enzyme catalyses 3-dehydroquinate = 3-dehydroshikimate + H2O. Its pathway is metabolic intermediate biosynthesis; chorismate biosynthesis; chorismate from D-erythrose 4-phosphate and phosphoenolpyruvate: step 3/7. The sequence is that of 3-dehydroquinate dehydratase (yqhS) from Bacillus subtilis (strain 168).